The primary structure comprises 217 residues: uncharacterized protein (217 aa).

A signal peptide spans methionine 1–glycine 24.

This is an uncharacterized protein from Aedes vexans (Inland floodwater mosquito).